The chain runs to 332 residues: MRIAFFSAQPYEKEPFEKVNENYKHEIDYHESILNKKTAVLAEKAPVVCVFVNDKVDADTLKVLAKNGTKLIALRCAGFNNVDLKAAADNGITVVRVPAYSPYAVAEYTIGLLLSLNRKIHRAYVRVREDDFNLNGLLGHDLHGKTIGLLGTGRIGGLVAKCLKLGFGCEVLAHDIKPNKELEKFGIQFVEQQEVLAKADFLCLHCPLTPDTEHLVDEKLLASMKKGVKIINTSRGGLVDTKALVKAIESGQVGGCAMDVYEGERRLFYRDLSNEVIKDTTFQQLANFPNVLVTSHQAFFTAEALSAIAHTTLKNVSDFASQNNDPSVIVKN.

Residues 154–155 (RI), 233–235 (TSR), and Asp259 contribute to the NAD(+) site. The active site involves Arg235. Glu264 is a catalytic residue. Catalysis depends on His296, which acts as the Proton donor. 296–299 (HQAF) is a binding site for NAD(+).

This sequence belongs to the D-isomer specific 2-hydroxyacid dehydrogenase family.

It is found in the cytoplasm. It localises to the nucleus. This is 2-hydroxyacid dehydrogenase homolog 1 from Schizosaccharomyces pombe (strain 972 / ATCC 24843) (Fission yeast).